The chain runs to 410 residues: Putative transporter AmpG 1 (410 aa).

12 helical membrane-spanning segments follow: residues 5-25, 40-60, 76-96, 98-118, 141-161, 169-189, 217-237, 265-285, 290-310, 320-340, 356-378, and 383-402; these read LSII…TGNT, IGLL…APIF, LSWI…LSFL, PFDN…FSSM, GIYI…AIYL, EIYK…IVGV, ILKP…LILY, VGKF…GFIM, ILDS…LFII, LLFI…TAYI, YSFF…GYIV, and WQNF…LVLL.

Belongs to the major facilitator superfamily.

The protein resides in the cell inner membrane. The polypeptide is Putative transporter AmpG 1 (ampG1) (Rickettsia bellii (strain RML369-C)).